Consider the following 352-residue polypeptide: MKKIVFTGGGTVGHVTLNLLLMPKFIEDGWEVHYIGDKRGIEHQEILKSGLDVTFHSIATGKLRRYFSWQNMLDVFKVGWGIVQSLFIMLRLRPQTLFSKGGFVSVPPVIAARVSGVPVFIHESDLSMGLANKIAYKFATKMYSTFEQASSLSKVEHVGAVTKVSDQKNPEPDELVDIQTHFNHKLPTVLFVGGSAGARVFNQLVTDHKKELTERYNIINLTGDSSLNELSQNLFRVDYVTDLYQPLLELADIVVTRGGANTIFELLAIAKLHVIVPLGREASRGDQIENAAYFVKKGYAEDLQESDLTLDSLEEKLSHLLSHKEDYQAKMKASKELKSLADFYQLLKKDLS.

Residues Ser195 and Gln287 each coordinate UDP-N-acetyl-alpha-D-glucosamine.

The protein belongs to the glycosyltransferase 28 family. MurG subfamily.

It is found in the cell membrane. The catalysed reaction is Mur2Ac(oyl-L-Ala-gamma-D-Glu-L-Lys-D-Ala-D-Ala)-di-trans,octa-cis-undecaprenyl diphosphate + UDP-N-acetyl-alpha-D-glucosamine = beta-D-GlcNAc-(1-&gt;4)-Mur2Ac(oyl-L-Ala-gamma-D-Glu-L-Lys-D-Ala-D-Ala)-di-trans,octa-cis-undecaprenyl diphosphate + UDP + H(+). It participates in cell wall biogenesis; peptidoglycan biosynthesis. Cell wall formation. Catalyzes the transfer of a GlcNAc subunit on undecaprenyl-pyrophosphoryl-MurNAc-pentapeptide (lipid intermediate I) to form undecaprenyl-pyrophosphoryl-MurNAc-(pentapeptide)GlcNAc (lipid intermediate II). The sequence is that of UDP-N-acetylglucosamine--N-acetylmuramyl-(pentapeptide) pyrophosphoryl-undecaprenol N-acetylglucosamine transferase from Streptococcus pneumoniae (strain JJA).